The following is a 376-amino-acid chain: Lysocardiolipin acyltransferase 1 (376 aa).

A helical membrane pass occupies residues 9–29 (FILFLFAGSFFGSIFMLGPIL). N-linked (GlcNAc...) asparagine glycosylation is present at N35. A helical membrane pass occupies residues 48-68 (ATWLTLPVALLETMFGVRVVI). The HXXXXD motif signature appears at 85–90 (HRTRVD). The residue at position 183 (K183) is an N6-acetyllysine. Helical transmembrane passes span 309–329 (LLSIVYWALFCSAMCLLIYLY) and 336–356 (FIISIVFFVLQERIFGGLEII).

This sequence belongs to the 1-acyl-sn-glycerol-3-phosphate acyltransferase family. As to expression, widely expressed with highest expression in heart, liver and 12.5 dpc aorta-gonad-mesonephros and lower levels in the 16 dpc fetal liver and adult bone marrow. In bone marrow, highest levels are found in B-cells compared with whole bone marrow, T-cells, erythrocytes, and granulocytes.

It localises to the endoplasmic reticulum membrane. It catalyses the reaction a 1-acyl-sn-glycero-3-phosphate + an acyl-CoA = a 1,2-diacyl-sn-glycero-3-phosphate + CoA. The catalysed reaction is a 1-acyl-sn-glycero-3-phospho-(1D-myo-inositol) + an acyl-CoA = a 1,2-diacyl-sn-glycero-3-phospho-(1D-myo-inositol) + CoA. It carries out the reaction 1-acyl-sn-glycero-3-phospho-(1'-sn-glycerol) + an acyl-CoA = a 1,2-diacyl-sn-glycero-3-phospho-(1'-sn-glycerol) + CoA. The enzyme catalyses 1-hexadecanoyl-sn-glycero-3-phosphate + (9Z)-octadecenoyl-CoA = 1-hexadecanoyl-2-(9Z-octadecenoyl)-sn-glycero-3-phosphate + CoA. It catalyses the reaction 1-(9Z-octadecenoyl)-sn-glycero-3-phosphate + (9Z)-octadecenoyl-CoA = 1,2-di-(9Z-octadecenoyl)-sn-glycero-3-phosphate + CoA. The catalysed reaction is 1-(9Z,12Z)-octadecadienoyl-sn-glycero-3-phosphate + (9Z)-octadecenoyl-CoA = 1-(9Z,12Z)-octadecadienoyl-2-(9Z)-octadecenoyl-sn-glycero-3-phosphate + CoA. It carries out the reaction 1-(9Z,12Z,15Z)-octadecatrienoyl-sn-glycero-3-phosphate + (9Z)-octadecenoyl-CoA = 1-(9Z,12Z,15Z)-octadecatrienoyl-2-(9Z)-octadecenoyl-sn-glycero-3-phosphate + CoA. The enzyme catalyses 1-(9Z-octadecenoyl)-sn-glycero-3-phosphate + hexadecanoyl-CoA = 1-(9Z)-octadecenoyl-2-hexadecanoyl-sn-glycero-3-phosphate + CoA. It catalyses the reaction 1-(9Z-octadecenoyl)-sn-glycero-3-phosphate + octadecanoyl-CoA = 1-(9Z-octadecenoyl)-2-octadecanoyl-sn-glycero-3-phosphate + CoA. The catalysed reaction is 1-acyl-sn-glycero-3-phospho-(1'-sn-glycerol) + (9Z)-octadecenoyl-CoA = 1-acyl-2-(9Z-octadecenoyl)-sn-glycero-3-phospho-(1'-sn-glycerol) + CoA. It carries out the reaction a 1-acyl-sn-glycero-3-phospho-(1D-myo-inositol) + (9Z)-octadecenoyl-CoA = a 1-acyl-2-(9Z-octadecenoyl)-sn-glycero-3-phospho-(1D-myo-inositol) + CoA. The enzyme catalyses 1-hexadecanoyl-sn-glycero-3-phospho-(1D-myo-inositol) + hexadecanoyl-CoA = 1,2-dihexadecanoyl-sn-glycero-3-phospho-(1D-myo-inositol) + CoA. It catalyses the reaction 1-hexadecanoyl-sn-glycero-3-phospho-(1D-myo-inositol) + octadecanoyl-CoA = 1-hexadecanoyl-2-octadecanoyl-sn-glycero-3-phospho-(1D-myo-inositol) + CoA. The catalysed reaction is 1-hexadecanoyl-sn-glycero-3-phospho-(1D-myo-inositol) + (9Z)-octadecenoyl-CoA = 1-hexadecanoyl-2-(9Z-octadecenoyl)-sn-glycero-3-phospho-(1D-myo-inositol) + CoA. It carries out the reaction 1-hexadecanoyl-sn-glycero-3-phospho-(1D-myo-inositol) + (9Z,12Z)-octadecadienoyl-CoA = 1-hexadecanoyl-2-(9Z,12Z-octadecadienoyl)-sn-glycero-3-phospho-(1D-myo-inositol) + CoA. The enzyme catalyses 1-hexadecanoyl-sn-glycero-3-phospho-(1D-myo-inositol) + (5Z,8Z,11Z,14Z)-eicosatetraenoyl-CoA = 1-hexadecanoyl-2-(5Z,8Z,11Z,14Z-eicosatetraenoyl)-sn-glycero-3-phospho-D-myo-inositol + CoA. It catalyses the reaction 1-hexadecanoyl-sn-glycero-3-phospho-(1'-sn-glycerol) + hexadecanoyl-CoA = 1,2-dihexadecanoyl-sn-glycero-3-phospho-(1'-sn-glycerol) + CoA. The catalysed reaction is 1-hexadecanoyl-sn-glycero-3-phospho-(1'-sn-glycerol) + octadecanoyl-CoA = 1-hexadecanoyl-2-octadecanoyl-sn-glycero-3-phospho-(1'-sn-glycerol) + CoA. It carries out the reaction 1-hexadecanoyl-sn-glycero-3-phospho-(1'-sn-glycerol) + (9Z)-octadecenoyl-CoA = 1-hexadecanoyl-2-(9Z-octadecenoyl)-sn-glycero-3-phospho-(1'-sn-glycerol) + CoA. The enzyme catalyses 1-hexadecanoyl-sn-glycero-3-phospho-(1'-sn-glycerol) + (9Z,12Z)-octadecadienoyl-CoA = 1-hexadecanoyl-2-(9Z,12Z-octadecadienoyl)-sn-glycero-3-phospho-(1'-sn-glycerol) + CoA. It catalyses the reaction 1-tetradecanoyl-sn-glycero-3-phospho-(1'-sn-glycerol) + (9Z)-octadecenoyl-CoA = 1-tetradecanoyl-2-(9Z-octadecenoyl)-sn-glycero-3-phospho-(1'-sn-glycerol) + CoA. The catalysed reaction is 1-octadecanoyl-sn-glycero-3-phospho-(1'-sn-glycerol) + (9Z)-octadecenoyl-CoA = 1-octadecanoyl-2-(9Z-octadecenoyl)-sn-glycero-3-phospho-(1'-sn-glycerol) + CoA. It carries out the reaction 1-(9Z-octadecenoyl)-sn-glycero-3-phospho-(1'-sn-glycerol) + (9Z)-octadecenoyl-CoA = 1,2-di-(9Z-octadecenoyl)-sn-glycero-3-phospho-(1'-sn-glycerol) + CoA. The enzyme catalyses 1-hexadecanoyl-sn-glycero-3-phospho-(1D-myo-inositol) + dodecanoyl-CoA = 1-hexadecanoyl-2-dodecanoyl-sn-glycero-3-phospho-(1D-myo-inositol) + CoA. It catalyses the reaction 1',3'-bis-[1-acyl-sn-glycero-3-phospho]-glycerol + (9Z)-octadecenoyl-CoA = 1'-[1-acyl-2-(9Z)-octadecenoyl-sn-glycero-3-phospho],3'-[1-acyl,2-hydroxy-sn-glycero-3-phospho]-glycerol + CoA. The catalysed reaction is 1'-[1,2-diacyl-sn-glycero-3-phospho],3'-[1-acyl-sn-glycero-3-phospho]-glycerol + (9Z)-octadecenoyl-CoA = 1'-[1,2-diacyl-sn-glycero-3-phospho],3'-[1-acyl,2-(9Z)-octadecenoyl-sn-glycero-3-phospho]-glycerol + CoA. It carries out the reaction 1'-[1,2-diacyl-sn-glycero-3-phospho],3'-[1-acyl-sn-glycero-3-phospho]-glycerol + (9Z,12Z)-octadecadienoyl-CoA = 1'-[1,2-diacyl-sn-glycero-3-phospho],3'-[1-acyl,2-(9Z,12Z)-octadecadienoyl-sn-glycero-3-phospho]-glycerol + CoA. The enzyme catalyses 1'-[1,2-diacyl-sn-glycero-3-phospho],3'-[1-acyl-sn-glycero-3-phospho]-glycerol + dodecanoyl-CoA = 1'-[1,2-diacyl-sn-glycero-3-phospho],3'-[1-acyl,2-dodecanoyl-sn-glycero-3-phospho]-glycerol + CoA. It catalyses the reaction 1',3'-bis-[1-acyl-sn-glycero-3-phospho]-glycerol + dodecanoyl-CoA = 1'-[1-acyl-2-dodecanoyl-sn-glycero-3-phospho],3'-[1-acyl,2-hydroxy-sn-glycero-3-phospho]-glycerol + CoA. The catalysed reaction is a 1-acyl-sn-glycero-3-phosphate + (9Z)-octadecenoyl-CoA = a 1-acyl-2-(9Z-octadecenoyl)-sn-glycero-3-phosphate + CoA. It carries out the reaction 1',3'-bis-[1-acyl-sn-glycero-3-phospho]-glycerol + (9Z,12Z)-octadecadienoyl-CoA = 1'-[1-acyl-2-(9Z,12Z)-octadecadienoyl-sn-glycero-3-phospho],3'-[1-acyl,2-hydroxy-sn-glycero-3-phospho]-glycerol + CoA. The enzyme catalyses 1',3'-bis-[1-acyl-sn-glycero-3-phospho]-glycerol + hexadecanoyl-CoA = 1'-[1-acyl-2-hexadecanoyl-sn-glycero-3-phospho],3'-[1-acyl,2-hydroxy-sn-glycero-3-phospho]-glycerol + CoA. It catalyses the reaction 1',3'-bis-[1-acyl-sn-glycero-3-phospho]-glycerol + octadecanoyl-CoA = 1'-[1-acyl-2-octadecanoyl-sn-glycero-3-phospho],3'-[1-acyl,2-hydroxy-sn-glycero-3-phospho]-glycerol + CoA. The catalysed reaction is 1'-[1,2-diacyl-sn-glycero-3-phospho],3'-[1-acyl-sn-glycero-3-phospho]-glycerol + octanoyl-CoA = 1'-[1,2-diacyl-sn-glycero-3-phospho],3'-[1-acyl,2-octanoyl-sn-glycero-3-phospho]-glycerol + CoA. It carries out the reaction 1',3'-bis-[1-acyl-sn-glycero-3-phospho]-glycerol + octanoyl-CoA = 1'-[1-acyl-2-octanoyl-sn-glycero-3-phospho],3'-[1-acyl,2-hydroxy-sn-glycero-3-phospho]-glycerol + CoA. The enzyme catalyses 1'-[1,2-diacyl-sn-glycero-3-phospho],3'-[1-acyl-sn-glycero-3-phospho]-glycerol + hexadecanoyl-CoA = 1'-[1,2-diacyl-sn-glycero-3-phospho],3'-[1-acyl,2-hexadecanoyl-sn-glycero-3-phospho]-glycerol + CoA. It catalyses the reaction 1'-[1,2-diacyl-sn-glycero-3-phospho],3'-[1-acyl-sn-glycero-3-phospho]-glycerol + (5Z,8Z,11Z,14Z)-eicosatetraenoyl-CoA = 1'-[1,2-diacyl-sn-glycero-3-phospho],3'-[1-acyl,2-(5Z,8Z,11Z,14Z)-eicosatetraenoyl-sn-glycero-3-phospho]-glycerol + CoA. The catalysed reaction is 1',3'-bis-[1-acyl-sn-glycero-3-phospho]-glycerol + (5Z,8Z,11Z,14Z)-eicosatetraenoyl-CoA = 1'-[1-acyl-2-(5Z,8Z,11Z,14Z)-eicosatetraenoyl-sn-glycero-3-phospho],3'-[1-acyl,2-hydroxy-sn-glycero-3-phospho]-glycerol + CoA. It carries out the reaction a 1-acyl-sn-glycero-3-phospho-(1D-myo-inositol) + octadecanoyl-CoA = a 1-acyl-2-octadecanoyl-sn-glycero-3-phospho-(1D-myo-inositol) + CoA. The enzyme catalyses a 2-acyl-sn-glycero-3-phospho-D-myo-inositol + octadecanoyl-CoA = 1-octadecanoyl-2-acyl-sn-glycero-3-phospho-1D-myo-inositol + CoA. Its pathway is phospholipid metabolism; CDP-diacylglycerol biosynthesis; CDP-diacylglycerol from sn-glycerol 3-phosphate: step 2/3. Exhibits acyl-CoA:lysocardiolipin acyltransferase (ALCAT) activity; catalyzes the reacylation of lyso-cardiolipin to cardiolipin (CL), a key step in CL remodeling. Recognizes both monolysocardiolipin and dilysocardiolipin as substrates with a preference for linoleoyl-CoA and oleoyl-CoA as acyl donors. Also exhibits 1-acyl-sn-glycerol-3-phosphate acyltransferase activity (AGPAT) activity; converts 1-acyl-sn-glycerol-3- phosphate (lysophosphatidic acid or LPA) into 1,2-diacyl-sn-glycerol-3- phosphate (phosphatidic acid or PA) by incorporating an acyl moiety at the sn-2 position of the glycerol backbone. Possesses lysophosphatidylinositol acyltransferase (LPIAT) activity. Possesses lysophosphatidylglycerol acyltransferase (LPGAT) activity. Required for establishment of the hematopoietic and endothelial lineages. The chain is Lysocardiolipin acyltransferase 1 (Lclat1) from Mus musculus (Mouse).